The chain runs to 1379 residues: MDAIHPVSLRNSKRHPLLHSERNLSRRAVSPSISRSFFQHSNGSFPLFQNHRKSLPSAIYKSVDPYVDANPLDPLAAAKASFADFPEQDDSQSSTSPLSSKYHTKKNKQIFVEDSRRGGAASNAAAIAAKKSGYYERTSTRKRSLTVPTPRTSFPHHPRSRRFSLKNAAIATSYHKFKPLSSNSLSSSGMHFSASKQAFNSPLLQTFSPSPSVSPFSNPAVEKLKTSASKQAAEAQSLREFDFFTPTPEPSDKNLEKLKNGASKQASESQSLKNMESLSLARSSPILTSEKLKNGASKQAIESPPFRASEPLPSSNIIPNPAMERLKNGASKLAIESQPFKSAEPLSSAIPLPNPMSEKMRNGASKQAIMAQSSKINPLPPLTASISDPSFEKLKNTASKQAIESQSLMNSGPELLEPSISDPMLEKMKTDAGKQTVESLSLKSSDATIPKPSVSDLGVEKLKNDASKCAVESQSLMINDPSVSSTSFYNPNMEKLKNGAIKQAIEHQALNAAILNKTQLPYFHQSSSELPISASKRAALSQQTESASKSSSNISEMCDSHPPSNFSISASQQASKDRFSEATSSIDLDLSPGRSLSLASSKLSVKEAGARVYNRSVATPVMTPSNPFEISKSASQLASIAQVPVSEPAKTSEVNLKKSLSLASSKLSFQEAGTSLKEKTANVQHSPEVLNDRSLASLSASRHADAISSKSKQHTEIAQPAFNTTGTVLMKTKSNLSDSALSTPQHSDSVLFDITSKAARLASTCAKTDLHRKPRRKHKSFTLENYFGHNAEDESPQSDEVESQTPPSGYSENDIGGTDIYPFALQGAALAAAKDFSRREASLSDSQSAASMDMLPMKKKLSHSSASSTRSIKSLLTNANQKHIHSSINETDDIPTMAAHIVATGQKNKEKAPSFSNDQALDHLLGSAHKRIPSNKTEWSSSSLHIPSHNSFSDIHHRKIAAHAAAITAASEKLTPSIEETSYSSSKAHDASLSAATLVANKDKLIHAPTPQVLAPVLPKVSLPHRHSVSLGQIRGESEVEGDVFYDAPSDKEDLGSSNAPLDVPHGANRSSMDEVNGSKYDYSDGILDGSGQYTDSDMSDDENSLKDSQSSVLSFSAVPTKVLKFKLRDVLGSEYSPSPQLLASSSDVSGSSSAVRAAMKADKIFPAVHENPPPLKTKQSIAKPSPHTLRVPQKKHKHFYHRDDGKYKSGTNLRKSETVDLPQFFIDENRRKLYEGLWAANKGYLLSKSEYSKPNDLICNIVVRELWSRSGAPTSVLAKIYDLVDRHHTGVLGRDEFIVGMFLIDQYLKGRKLPLKVPDSVWLSSKRMGDMLWRLEKLQKKTDNKKPFFKKKKKKRKHLKKFFDFNTTAKVNEGAMTD.

Disordered stretches follow at residues 1–25 (MDAI…RNLS), 138–159 (TSTR…HHPR), 240–314 (EFDF…PLPS), 337–370 (SQPF…QAIM), 534–573 (ASKR…ASQQ), 768–816 (TDLH…NDIG), 1047–1110 (DAPS…KDSQ), and 1168–1208 (AVHE…DGKY). Positions 250–259 (PSDKNLEKLK) are enriched in basic and acidic residues. Positions 262–287 (ASKQASESQSLKNMESLSLARSSPIL) are enriched in polar residues. Over residues 541-555 (SQQTESASKSSSNIS) the composition is skewed to low complexity. A compositionally biased stretch (polar residues) spans 562 to 573 (PPSNFSISASQQ). Over residues 770–780 (LHRKPRRKHKS) the composition is skewed to basic residues. The segment covering 793-802 (DESPQSDEVE) has biased composition (acidic residues). Residues 1240–1329 (AANKGYLLSK…DSVWLSSKRM (90 aa)) form the EH domain. Residues 1273-1308 (APTSVLAKIYDLVDRHHTGVLGRDEFIVGMFLIDQY) form the EF-hand domain.

The protein belongs to the IRS4 family.

Its function is as follows. Positive regulator of phosphatidylinositol 4,5-bisphosphate turnover and negatively regulates signaling through the cell integrity pathway. Involved in rDNA silencing. The polypeptide is Increased rDNA silencing protein 4 homolog (Schizosaccharomyces pombe (strain 972 / ATCC 24843) (Fission yeast)).